The sequence spans 74 residues: High-potential iron-sulfur protein isozyme 2 (74 aa).

[4Fe-4S] cluster is bound by residues cysteine 36, cysteine 39, cysteine 53, and cysteine 67.

Homodimer.

Specific class of high-redox-potential 4Fe-4S ferredoxins. Functions in anaerobic electron transport in most purple and in some other photosynthetic bacteria and in at least one genus (Paracoccus) of halophilic, denitrifying bacteria. This is High-potential iron-sulfur protein isozyme 2 from Ectothiorhodospira mobilis.